The sequence spans 267 residues: Thiamine pyrophosphokinase 2 (267 aa).

The protein belongs to the thiamine pyrophosphokinase family. In terms of tissue distribution, expressed in leaves and at lower levels in flowers.

It localises to the cytoplasm. The protein resides in the cytosol. The catalysed reaction is thiamine + ATP = thiamine diphosphate + AMP + H(+). It participates in cofactor biosynthesis; thiamine diphosphate biosynthesis; thiamine diphosphate from thiamine: step 1/1. Its function is as follows. Catalyzes the phosphorylation of thiamine to thiamine pyrophosphate (TPP). TPP is an active cofactor for enzymes involved in glycolysis and energy production. Plant leaves require high levels of TPP for photosynthesis and carbohydrate metabolism. This Arabidopsis thaliana (Mouse-ear cress) protein is Thiamine pyrophosphokinase 2.